The chain runs to 89 residues: Otospiralin (89 aa).

A signal peptide spans 1-21 (MQACMVPGLALCLLLGPLAGA).

Belongs to the otospiralin family. Ear specific.

It is found in the secreted. May be essential for the survival of the neurosensory epithelium of the inner ear. In Homo sapiens (Human), this protein is Otospiralin (OTOS).